A 184-amino-acid chain; its full sequence is uncharacterized protein (184 aa).

This is an uncharacterized protein from Archaeoglobus fulgidus (strain ATCC 49558 / DSM 4304 / JCM 9628 / NBRC 100126 / VC-16).